The following is a 555-amino-acid chain: Urocanate hydratase (555 aa).

NAD(+) contacts are provided by residues 52-53 (GG), glutamine 130, 176-178 (GMG), glutamate 196, arginine 201, 242-243 (NA), 263-267 (QTSAH), 273-274 (YL), and tyrosine 322. Cysteine 410 is a catalytic residue. Position 492 (glycine 492) interacts with NAD(+).

Belongs to the urocanase family. It depends on NAD(+) as a cofactor.

It localises to the cytoplasm. It catalyses the reaction 4-imidazolone-5-propanoate = trans-urocanate + H2O. It participates in amino-acid degradation; L-histidine degradation into L-glutamate; N-formimidoyl-L-glutamate from L-histidine: step 2/3. In terms of biological role, catalyzes the conversion of urocanate to 4-imidazolone-5-propionate. This chain is Urocanate hydratase, found in Shewanella baltica (strain OS195).